Reading from the N-terminus, the 135-residue chain is Ribosome-binding factor A (135 aa).

It belongs to the RbfA family. Monomer. Binds 30S ribosomal subunits, but not 50S ribosomal subunits or 70S ribosomes.

Its subcellular location is the cytoplasm. In terms of biological role, one of several proteins that assist in the late maturation steps of the functional core of the 30S ribosomal subunit. Associates with free 30S ribosomal subunits (but not with 30S subunits that are part of 70S ribosomes or polysomes). Required for efficient processing of 16S rRNA. May interact with the 5'-terminal helix region of 16S rRNA. The sequence is that of Ribosome-binding factor A from Rhodopseudomonas palustris (strain HaA2).